Here is a 209-residue protein sequence, read N- to C-terminus: Pyroglutamyl-peptidase 1 (209 aa).

Active-site residues include Glu85, Cys149, and His168.

Belongs to the peptidase C15 family. As to quaternary structure, monomer.

It localises to the cytoplasm. The catalysed reaction is Release of an N-terminal pyroglutamyl group from a polypeptide, the second amino acid generally not being Pro.. Functionally, removes 5-oxoproline from various penultimate amino acid residues except L-proline. The sequence is that of Pyroglutamyl-peptidase 1 (Pgpep1) from Rattus norvegicus (Rat).